Reading from the N-terminus, the 1070-residue chain is DNA-directed RNA polymerase subunit beta (1070 aa).

Belongs to the RNA polymerase beta chain family. In plastids the minimal PEP RNA polymerase catalytic core is composed of four subunits: alpha, beta, beta', and beta''. When a (nuclear-encoded) sigma factor is associated with the core the holoenzyme is formed, which can initiate transcription.

The protein localises to the plastid. Its subcellular location is the chloroplast. It carries out the reaction RNA(n) + a ribonucleoside 5'-triphosphate = RNA(n+1) + diphosphate. DNA-dependent RNA polymerase catalyzes the transcription of DNA into RNA using the four ribonucleoside triphosphates as substrates. This Daucus carota (Wild carrot) protein is DNA-directed RNA polymerase subunit beta.